A 167-amino-acid polypeptide reads, in one-letter code: Protein FimG (167 aa).

An N-terminal signal peptide occupies residues 1–23 (MKWCKRGYVLAAILALASATIQA). A disulfide bond links Cys39 and Cys77.

The protein belongs to the fimbrial protein family.

Its subcellular location is the fimbrium. Functionally, involved in regulation of length and mediation of adhesion of type 1 fimbriae (but not necessary for the production of fimbriae). Involved in the integration of FimH in the fimbriae. In Escherichia coli (strain K12), this protein is Protein FimG (fimG).